Here is a 162-residue protein sequence, read N- to C-terminus: Transcription elongation factor GreA (162 aa).

A coiled-coil region spans residues 45 to 75 (ENAEYEAAREKQAFIEGRIKELEDMAARAEI).

This sequence belongs to the GreA/GreB family.

In terms of biological role, necessary for efficient RNA polymerase transcription elongation past template-encoded arresting sites. The arresting sites in DNA have the property of trapping a certain fraction of elongating RNA polymerases that pass through, resulting in locked ternary complexes. Cleavage of the nascent transcript by cleavage factors such as GreA or GreB allows the resumption of elongation from the new 3'terminus. GreA releases sequences of 2 to 3 nucleotides. The polypeptide is Transcription elongation factor GreA (Rickettsia canadensis (strain McKiel)).